Consider the following 316-residue polypeptide: Protein FLUORESCENT IN BLUE LIGHT, chloroplastic (316 aa).

A chloroplast-targeting transit peptide spans 1–26 (MAALIRCCSSFSHTSGGQPPPRDKSR). Residues 125 to 145 (MFSMPILLLVALIGATVGGLL) traverse the membrane as a helical segment. Residues 144-175 (LLARQRKGELQRLNEQLRQINAALRRQAKIES) adopt a coiled-coil conformation. TPR repeat units lie at residues 203 to 236 (LISKLKTGKTFLRNQEPEKAYTEFKIALELAQSL), 243 to 276 (KKAARGLGASLQRQGKYREAIQYHSMVLAISKRE), and 283 to 316 (TEAYGAIADCYTELGDLEKAGKFYDTYIARLETD).

As to quaternary structure, part of the FLU-containing chloroplast membrane complex composed of FLU, CRD1, PORB, PORC, CHLP and HEMA1. Interacts with HEMA1 (via C-terminus) only in the absence of light. No interaction with HEMA2.

It localises to the plastid. The protein resides in the chloroplast membrane. Its subcellular location is the chloroplast thylakoid membrane. Its function is as follows. Negative regulator of tetrapyrrole biosynthesis (including chlorophyll) in chloroplasts, probably via HEMA1 repression. Inhibits especially the magnesium ion Mg(2+) branch of tetrapyrrole biosynthesis, but independently of heme. The polypeptide is Protein FLUORESCENT IN BLUE LIGHT, chloroplastic (FLU) (Arabidopsis thaliana (Mouse-ear cress)).